The following is a 522-amino-acid chain: Glucose-6-phosphate 1-dehydrogenase (522 aa).

Residues 40–47, arginine 74, and lysine 177 contribute to the NADP(+) site; that span reads GASGDLAK. Residues lysine 177, 207–211, glutamate 245, and aspartate 264 each bind D-glucose 6-phosphate; that span reads HYLGK. Histidine 269 functions as the Proton acceptor in the catalytic mechanism. Arginine 364 contributes to the NADP(+) binding site. The D-glucose 6-phosphate site is built by lysine 367 and lysine 372. 3 residues coordinate NADP(+): lysine 373, arginine 377, and arginine 401. Glutamine 403 serves as a coordination point for D-glucose 6-phosphate. NADP(+) contacts are provided by residues 409 to 411, 429 to 431, arginine 495, and tryptophan 517; these read YMK and DLT.

It belongs to the glucose-6-phosphate dehydrogenase family.

It is found in the cytoplasm. It localises to the cytosol. It catalyses the reaction D-glucose 6-phosphate + NADP(+) = 6-phospho-D-glucono-1,5-lactone + NADPH + H(+). The protein operates within carbohydrate degradation; pentose phosphate pathway; D-ribulose 5-phosphate from D-glucose 6-phosphate (oxidative stage): step 1/3. Its function is as follows. Cytosolic glucose-6-phosphate dehydrogenase that catalyzes the first and rate-limiting step of the oxidative branch within the pentose phosphate pathway/shunt, an alternative route to glycolysis for the dissimilation of carbohydrates and a major source of reducing power and metabolic intermediates for fatty acid and nucleic acid biosynthetic processes. The sequence is that of Glucose-6-phosphate 1-dehydrogenase (gspd-1) from Caenorhabditis elegans.